The following is a 469-amino-acid chain: Ribulose bisphosphate carboxylase large chain (469 aa).

Lys5 bears the N6,N6,N6-trimethyllysine mark. Residues Asn114 and Thr164 each contribute to the substrate site. Lys166 functions as the Proton acceptor in the catalytic mechanism. Lys168 provides a ligand contact to substrate. 3 residues coordinate Mg(2+): Lys192, Asp194, and Glu195. An N6-carboxylysine modification is found at Lys192. The active-site Proton acceptor is the His285. Positions 286, 318, and 370 each coordinate substrate.

Belongs to the RuBisCO large chain family. Type I subfamily. In terms of assembly, heterohexadecamer of 8 large chains and 8 small chains; disulfide-linked. The disulfide link is formed within the large subunit homodimers. The cofactor is Mg(2+). The disulfide bond which can form in the large chain dimeric partners within the hexadecamer appears to be associated with oxidative stress and protein turnover.

It is found in the plastid. Its subcellular location is the chloroplast. It carries out the reaction 2 (2R)-3-phosphoglycerate + 2 H(+) = D-ribulose 1,5-bisphosphate + CO2 + H2O. The catalysed reaction is D-ribulose 1,5-bisphosphate + O2 = 2-phosphoglycolate + (2R)-3-phosphoglycerate + 2 H(+). Functionally, ruBisCO catalyzes two reactions: the carboxylation of D-ribulose 1,5-bisphosphate, the primary event in carbon dioxide fixation, as well as the oxidative fragmentation of the pentose substrate in the photorespiration process. Both reactions occur simultaneously and in competition at the same active site. The chain is Ribulose bisphosphate carboxylase large chain from Nicandra physalodes (Apple-of-Peru).